Consider the following 382-residue polypeptide: S-adenosylmethionine synthase (382 aa).

Histidine 15 contributes to the ATP binding site. Aspartate 17 is a binding site for Mg(2+). Residue glutamate 43 coordinates K(+). L-methionine is bound by residues glutamate 56 and glutamine 99. Residues 99 to 109 (QSPDINQGVDR) are flexible loop. Residues 164 to 166 (DAK), 230 to 231 (RF), aspartate 239, 245 to 246 (RK), alanine 262, and lysine 266 each bind ATP. Position 239 (aspartate 239) interacts with L-methionine. Residue lysine 270 participates in L-methionine binding.

Belongs to the AdoMet synthase family. As to quaternary structure, homotetramer; dimer of dimers. Mg(2+) is required as a cofactor. The cofactor is K(+).

The protein resides in the cytoplasm. It carries out the reaction L-methionine + ATP + H2O = S-adenosyl-L-methionine + phosphate + diphosphate. Its pathway is amino-acid biosynthesis; S-adenosyl-L-methionine biosynthesis; S-adenosyl-L-methionine from L-methionine: step 1/1. In terms of biological role, catalyzes the formation of S-adenosylmethionine (AdoMet) from methionine and ATP. The overall synthetic reaction is composed of two sequential steps, AdoMet formation and the subsequent tripolyphosphate hydrolysis which occurs prior to release of AdoMet from the enzyme. In Glaesserella parasuis serovar 5 (strain SH0165) (Haemophilus parasuis), this protein is S-adenosylmethionine synthase.